Consider the following 465-residue polypeptide: Apolipoprotein N-acyltransferase (465 aa).

The next 6 membrane-spanning stretches (helical) occupy residues 12–32 (AVLG…LSML), 49–69 (ALWG…LHPL), 80–100 (LPVA…LLLL), 122–142 (LLAL…LFWI), 161–181 (WLGS…LWQL), and 189–209 (CAWW…SLSP). Residues 221 to 448 (WQPAIPTREK…DAVAAAELQR (228 aa)) form the CN hydrolase domain. Residue Glu262 is the Proton acceptor of the active site. Lys312 is an active-site residue. Cys360 acts as the Nucleophile in catalysis.

This sequence belongs to the CN hydrolase family. Apolipoprotein N-acyltransferase subfamily.

It is found in the cell inner membrane. The enzyme catalyses N-terminal S-1,2-diacyl-sn-glyceryl-L-cysteinyl-[lipoprotein] + a glycerophospholipid = N-acyl-S-1,2-diacyl-sn-glyceryl-L-cysteinyl-[lipoprotein] + a 2-acyl-sn-glycero-3-phospholipid + H(+). It participates in protein modification; lipoprotein biosynthesis (N-acyl transfer). Its function is as follows. Catalyzes the phospholipid dependent N-acylation of the N-terminal cysteine of apolipoprotein, the last step in lipoprotein maturation. The polypeptide is Apolipoprotein N-acyltransferase (Parasynechococcus marenigrum (strain WH8102)).